Here is a 207-residue protein sequence, read N- to C-terminus: Imidazole glycerol phosphate synthase subunit HisH (207 aa).

Residues 2–207 (RTVVIDYGMG…FKRKAEKLTT (206 aa)) form the Glutamine amidotransferase type-1 domain. Residue cysteine 81 is the Nucleophile of the active site. Catalysis depends on residues histidine 183 and glutamate 185.

Heterodimer of HisH and HisF.

The protein localises to the cytoplasm. It carries out the reaction 5-[(5-phospho-1-deoxy-D-ribulos-1-ylimino)methylamino]-1-(5-phospho-beta-D-ribosyl)imidazole-4-carboxamide + L-glutamine = D-erythro-1-(imidazol-4-yl)glycerol 3-phosphate + 5-amino-1-(5-phospho-beta-D-ribosyl)imidazole-4-carboxamide + L-glutamate + H(+). The catalysed reaction is L-glutamine + H2O = L-glutamate + NH4(+). Its pathway is amino-acid biosynthesis; L-histidine biosynthesis; L-histidine from 5-phospho-alpha-D-ribose 1-diphosphate: step 5/9. IGPS catalyzes the conversion of PRFAR and glutamine to IGP, AICAR and glutamate. The HisH subunit catalyzes the hydrolysis of glutamine to glutamate and ammonia as part of the synthesis of IGP and AICAR. The resulting ammonia molecule is channeled to the active site of HisF. This is Imidazole glycerol phosphate synthase subunit HisH (hisH) from Aquifex aeolicus (strain VF5).